A 342-amino-acid polypeptide reads, in one-letter code: tRNA-specific 2-thiouridylase MnmA (342 aa).

Residues 6–13 (LLSGGVDS) and L32 each bind ATP. The active-site Nucleophile is C92. A disulfide bond links C92 and C191. G116 provides a ligand contact to ATP. Positions 138 to 140 (KDQ) are interaction with tRNA. C191 acts as the Cysteine persulfide intermediate in catalysis. The tract at residues 293 to 294 (RY) is interaction with tRNA.

It belongs to the MnmA/TRMU family.

Its subcellular location is the cytoplasm. The catalysed reaction is S-sulfanyl-L-cysteinyl-[protein] + uridine(34) in tRNA + AH2 + ATP = 2-thiouridine(34) in tRNA + L-cysteinyl-[protein] + A + AMP + diphosphate + H(+). Its function is as follows. Catalyzes the 2-thiolation of uridine at the wobble position (U34) of tRNA, leading to the formation of s(2)U34. The protein is tRNA-specific 2-thiouridylase MnmA of Helicobacter pylori (strain G27).